The primary structure comprises 218 residues: Ribonuclease HII (218 aa).

The region spanning 13-202 is the RNase H type-2 domain; it reads DLVAGVDEVG…VRAAHEARAT (190 aa). The a divalent metal cation site is built by Asp-19, Glu-20, and Asp-111.

The protein belongs to the RNase HII family. Requires Mn(2+) as cofactor. The cofactor is Mg(2+).

It is found in the cytoplasm. It catalyses the reaction Endonucleolytic cleavage to 5'-phosphomonoester.. Functionally, endonuclease that specifically degrades the RNA of RNA-DNA hybrids. This is Ribonuclease HII from Pseudomonas syringae pv. syringae (strain B728a).